The following is a 137-amino-acid chain: Small ribosomal subunit protein uS12 (137 aa).

Disordered stretches follow at residues 1–21 (MPTI…KSDS) and 36–57 (TKLS…TPKK). Position 102 is a 3-methylthioaspartic acid (Asp-102).

Belongs to the universal ribosomal protein uS12 family. In terms of assembly, part of the 30S ribosomal subunit. Contacts proteins S8 and S17. May interact with IF1 in the 30S initiation complex.

Functionally, with S4 and S5 plays an important role in translational accuracy. Its function is as follows. Interacts with and stabilizes bases of the 16S rRNA that are involved in tRNA selection in the A site and with the mRNA backbone. Located at the interface of the 30S and 50S subunits, it traverses the body of the 30S subunit contacting proteins on the other side and probably holding the rRNA structure together. The combined cluster of proteins S8, S12 and S17 appears to hold together the shoulder and platform of the 30S subunit. This is Small ribosomal subunit protein uS12 from Streptococcus agalactiae serotype Ia (strain ATCC 27591 / A909 / CDC SS700).